The primary structure comprises 665 residues: MELTREKVLLLTFLRMQYSHILPDSIENRVISTEAPEWELDKSLQDLLIHDYDYSKTSFSSSPPIVANDTVSNVRKPSDTKQVNGAGGQVNHSRAEDSDYATSDLSESSDVGDDDNSCIFSFSKVPMQKDVASIKEEERLDPKISTLNNIDAIANLKLTNMVESSQAVNLTSSKQSSINQQSSVSTDYDDLRSISEESFHLSQGEIPLTFPMNSSLTDTEADAVVAVDALFPGKQRGTHNTVNKARSVSNAKAPTSALRALLEHKENSSQNGPLAENFATFSGHAESNALRLNIYFPSSESPSKPLFVELRKNVLVSEAIGYILLQYVNQQLVPPIEDEAQNPNYWNLRIVEDDGELDEDFPALDRVGPLSKFGFDAFALVKATPAQIKENQAAYPFKSKHPTSIPEANNKTHIRHTSSTSSQSQKQAQDVKDTLNTSHVVQVRLPPYGDNARFCNIEISKTTRLAMVLNQVCWMKQLERFKYTLRVAGSDTVLPLDKTFSSLDGNPTLELVKKKVRDKKGSTQQLPTSSPQNSVYGSIKKDAQSSTYNATDIMSSNTYQEFLVWKRQPVSFMGRHERLLAIDGEYVHIMPSESKNIFETPKTSSIHAGSIILCKQSKKSPCNFKMIVSKNRETKRYDFEVLSALEAAIIVSRIRALMNTVKKIN.

A Phosphoserine modification is found at Ser-62. 2 stretches are compositionally biased toward polar residues: residues 65-83 (IVAN…TKQV) and 100-109 (YATSDLSESS). Residues 65–112 (IVANDTVSNVRKPSDTKQVNGAGGQVNHSRAEDSDYATSDLSESSDVG) form a disordered region. At Ser-133 the chain carries Phosphoserine. Positions 255–392 (TSALRALLEH…ATPAQIKENQ (138 aa)) constitute a CRIM domain. The disordered stretch occupies residues 395–433 (YPFKSKHPTSIPEANNKTHIRHTSSTSSQSQKQAQDVKD). Phosphoserine occurs at positions 404, 490, 502, and 530. Residues 517–537 (RDKKGSTQQLPTSSPQNSVYG) form a disordered region. The span at 522–536 (STQQLPTSSPQNSVY) shows a compositional bias: polar residues. The SIN1-type PH domain maps to 558-659 (TYQEFLVWKR…IVSRIRALMN (102 aa)).

It belongs to the SIN1 family. The target of rapamycin complex 2 (TORC2) is composed of at least bit61, pop3/wat1, sin1, ste20 and tor1. Interacts with the sty1 MAP kinase. Post-translationally, phosphorylated; under environmental stress. Either Ser-61 or Ser-62 and Ser-298, Ser-299 or Ser-301 are phosphorylated as well.

Component of the mechanistic target of rapamycin complex 2 (mTORC2), which regulates multiple cellular processes to control cell growth in response to environmental signals. In response to signals, TORC2 phosphorylates AGC protein kinase family members, such as gad8. TORC2 is required for cell survival under various stress conditions. TORC2 positively controls G1 cell-cycle arrest, sexual development and amino acid uptake. Positively regulates amino acid uptake through the control of expression of amino acid permeases. Within the mTORC2 complex, sin1 acts as a substrate adapter which recognizes and binds AGC protein kinase family members for phosphorylation by tor1. This Schizosaccharomyces pombe (strain 972 / ATCC 24843) (Fission yeast) protein is Target of rapamycin complex 2 subunit sin1.